Reading from the N-terminus, the 414-residue chain is MYQRNILVEQADPEVWAAIQAENLRQEQHIELIASENYASPAVMAAQGSQLTNKYAEGYPGKRYYGGCENVDVVEQLAIDRVKKLFGADAANVQPNSGSQANQAVLLAFLKPGDTILGMSLAEGGHLTHGMPLNMSGKWFNIVSYGLNEKEEIDYDALEAKAREHKPKLIIAGASAYSLRIDFERFAKIAKEVGAIFWVDIAHYAGLVVAGEYPNPVPFADVVTSTTHKSLRGPRGGIILMKAEHEKAINSAIFPGLQGGPLEHVIAAKAVAFKEALTPEFKAYQQQVAKNAKVFAETLIERGLRIISGRTESHVMLVDLRAKGITGKAAEAALGQAHITINKNSIPNDPEKPMVTSGIRVGTPAITTRGFKEEETRITANLLADVLENPNDEANLAAVREKVHALTSRFPVYR.

(6S)-5,6,7,8-tetrahydrofolate-binding positions include Leu121 and 125 to 127 (GHL). The residue at position 229 (Lys229) is an N6-(pyridoxal phosphate)lysine.

The protein belongs to the SHMT family. As to quaternary structure, homodimer. The cofactor is pyridoxal 5'-phosphate.

The protein localises to the cytoplasm. The enzyme catalyses (6R)-5,10-methylene-5,6,7,8-tetrahydrofolate + glycine + H2O = (6S)-5,6,7,8-tetrahydrofolate + L-serine. Its pathway is one-carbon metabolism; tetrahydrofolate interconversion. It participates in amino-acid biosynthesis; glycine biosynthesis; glycine from L-serine: step 1/1. Its function is as follows. Catalyzes the reversible interconversion of serine and glycine with tetrahydrofolate (THF) serving as the one-carbon carrier. This reaction serves as the major source of one-carbon groups required for the biosynthesis of purines, thymidylate, methionine, and other important biomolecules. Also exhibits THF-independent aldolase activity toward beta-hydroxyamino acids, producing glycine and aldehydes, via a retro-aldol mechanism. The chain is Serine hydroxymethyltransferase from Paracidovorax citrulli (strain AAC00-1) (Acidovorax citrulli).